The primary structure comprises 353 residues: Paraneoplastic antigen Ma1 homolog (353 aa).

Belongs to the PNMA family.

The protein localises to the nucleus. The protein resides in the nucleolus. The polypeptide is Paraneoplastic antigen Ma1 homolog (PNMA1) (Bos taurus (Bovine)).